Here is a 374-residue protein sequence, read N- to C-terminus: Aclacinomycin 10-hydroxylase RdmB (374 aa).

S-adenosyl-L-methionine contacts are provided by Y171, G190, E213, D240, F241, and S255.

Belongs to the class I-like SAM-binding methyltransferase superfamily. Cation-independent O-methyltransferase family. Homodimer. Homotetramer in solution. Tetramers might not be very stable in solution.

It carries out the reaction 15-demethylaclacinomycin T + AH2 + O2 = 10-decarboxymethylaclacinomycin T + A + CO2 + H2O. The catalysed reaction is 10-carboxy-13-deoxycarminomycin + AH2 + O2 + H(+) = 10-hydroxy-13-deoxycarminomycin + A + CO2 + H2O. The enzyme catalyses 10-hydroxy-13-deoxycarminomycin + S-adenosyl-L-methionine = 10-hydroxy-13-deoxydaunorubicin + S-adenosyl-L-homocysteine + H(+). It functions in the pathway antibiotic biosynthesis; rhodomycin biosynthesis. The protein operates within antibiotic biosynthesis; aclacinomycin biosynthesis. The hydroxylation reaction requires S-adenosyl-L-methionine (SAM) as a cofactor. S-adenosine-L-homocysteine and sinefungin (a SAM analog) can also support the decarboxylative hydroxylation activity with 10-carboxy-13-deoxycarminomycin as substrate. SAM and its analogs are considered an essential structural ligand to maintain ternary structural integrity and the proper binding mode and orientation of electron-rich substrates during decarboxylative hydroxylation of C-10 by RdmB. In terms of biological role, involved in the biosynthesis of anthracyclines, an important group of aromatic polyketide antibiotics used in cancer chemotherapy. Acts as a 10-hydroxylase to catalyze a decarboxylative hydroxylation reaction on anthracyclines. During biosynthesis of rhodomycin, it catalyzes the removal of the carboxylic group at the C-10 position of 15-demethoxy-epsilon-rhodomycin coupled to hydroxylation at the same C-10 position to yield beta-rhodomycin. In vitro, can also catalyze the removal of the carboxylic group at the C-10 position of 15-demethoxyaclacinomycin T coupled to hydroxylation at the same C-10 position to yield 10-decarboxymethylaclacinomycin T. It can also use 10-carboxy-13-deoxycarminomycin, an analog of 15-demethoxy-epsilon-rhodomycin, to yield 10-hydroxy-13-deoxycarminomycin. Its function is as follows. In addition to its hydroxylation activity, it can act in vitro as a S-adenosyl-L-methionine-dependent O-methyltransferase and catalyze the 4-O-methylation of 10-hydroxy-13-deoxycarminomycin to 10-hydroxy-13-deoxydaunorubicin. The triglycosyl group of anthracyclines prevents the methylation reaction. The sequence is that of Aclacinomycin 10-hydroxylase RdmB from Streptomyces purpurascens.